The sequence spans 290 residues: Putative OX-2 membrane glycoprotein homolog (290 aa).

The first 17 residues, 1 to 17 (MSSLMLRLLPLLYIISA), serve as a signal peptide directing secretion. Over 18-267 (HFVLHPETSP…SDETVFTWTV (250 aa)) the chain is Extracellular. The Ig-like V-type domain occupies 23–135 (PETSPSLIYE…TFTVDNEKTS (113 aa)). Cysteine 41 and cysteine 125 are joined by a disulfide. N-linked (GlcNAc...) asparagine; by host glycosylation is found at asparagine 71, asparagine 104, asparagine 194, and asparagine 202. An Ig-like C2-type domain is found at 146–236 (PIVVLYFRYL…TNQKASALVT (91 aa)). The helical transmembrane segment at 268–288 (PLILILISVIVLLISVCIVAF) threads the bilayer. The Cytoplasmic portion of the chain corresponds to 289–290 (KS).

It localises to the membrane. The polypeptide is Putative OX-2 membrane glycoprotein homolog (U85) (Homo sapiens (Human)).